Reading from the N-terminus, the 98-residue chain is NADH-ubiquinone oxidoreductase chain 4L (98 aa).

3 helical membrane passes run 1–21 (MYSS…VNLI), 27–47 (FLMT…FVPI), and 61–81 (VILL…MVLM).

The protein belongs to the complex I subunit 4L family.

The protein localises to the mitochondrion membrane. It catalyses the reaction a ubiquinone + NADH + 5 H(+)(in) = a ubiquinol + NAD(+) + 4 H(+)(out). Functionally, core subunit of the mitochondrial membrane respiratory chain NADH dehydrogenase (Complex I) that is believed to belong to the minimal assembly required for catalysis. Complex I functions in the transfer of electrons from NADH to the respiratory chain. The immediate electron acceptor for the enzyme is believed to be ubiquinone. This Lumbricus terrestris (Common earthworm) protein is NADH-ubiquinone oxidoreductase chain 4L (ND4L).